The primary structure comprises 250 residues: 2,3-bisphosphoglycerate-dependent phosphoglycerate mutase (250 aa).

Substrate is bound by residues 8-15 (RHGESQWN), 21-22 (TG), R60, 87-90 (ERHY), K98, 114-115 (RR), and 183-184 (GN). Residue H9 is the Tele-phosphohistidine intermediate of the active site. The active-site Proton donor/acceptor is E87.

Belongs to the phosphoglycerate mutase family. BPG-dependent PGAM subfamily. Homodimer.

It catalyses the reaction (2R)-2-phosphoglycerate = (2R)-3-phosphoglycerate. Its pathway is carbohydrate degradation; glycolysis; pyruvate from D-glyceraldehyde 3-phosphate: step 3/5. Functionally, catalyzes the interconversion of 2-phosphoglycerate and 3-phosphoglycerate. The chain is 2,3-bisphosphoglycerate-dependent phosphoglycerate mutase from Bordetella parapertussis (strain 12822 / ATCC BAA-587 / NCTC 13253).